The chain runs to 446 residues: Sensor-type histidine kinase PrrB (446 aa).

2 helical membrane-spanning segments follow: residues 19-39 (VVATAIGAAIPVLIVGTVVWV) and 151-171 (LLICTFAIGAAAVFAWLLAAF). Residues 172–222 (AVRPFKQLAEQTRSIDAGDEAPRVEVHGASEAIEIAEAMRGMLQRIWNEQN) enclose the HAMP domain. The Histidine kinase domain occupies 237-446 (VSSHELRTPL…RLVLRLPGPS (210 aa)). H240 is modified (phosphohistidine; by autocatalysis).

Autophosphorylated.

Its subcellular location is the cell membrane. It carries out the reaction ATP + protein L-histidine = ADP + protein N-phospho-L-histidine.. In terms of biological role, member of the two-component regulatory system PrrB/PrrA that is involved specifically in early intracellular multiplication of Mycobacterium and is essential for its viability. Functions as a sensor protein kinase which is autophosphorylated at a histidine residue and transfers its phosphate group to the conserved aspartic acid residue in the regulatory domain of PrrA. In turn, PrrA binds to the upstream promoter regions of target genes including itself to positively regulate their expression. The chain is Sensor-type histidine kinase PrrB (prrB) from Mycobacterium bovis (strain ATCC BAA-935 / AF2122/97).